The primary structure comprises 87 residues: UPF0250 protein NE1487 (87 aa).

This sequence belongs to the UPF0250 family.

The sequence is that of UPF0250 protein NE1487 from Nitrosomonas europaea (strain ATCC 19718 / CIP 103999 / KCTC 2705 / NBRC 14298).